The sequence spans 688 residues: Zinc finger protein 770 (688 aa).

Lys11 is covalently cross-linked (Glycyl lysine isopeptide (Lys-Gly) (interchain with G-Cter in SUMO2)). C2H2-type zinc fingers lie at residues 27-49 (YVCNICFKHFETPSKLARHYLIH), 55-77 (FECDVCHKTFRQLVHLERHQLTH), and 81-103 (FKCSICQRHFKNLKTFVKHQQLH). Residues Lys112, Lys121, and Lys146 each participate in a glycyl lysine isopeptide (Lys-Gly) (interchain with G-Cter in SUMO2) cross-link. 3 C2H2-type zinc fingers span residues 160–182 (HACTICGKMFPSQSKLDRHVLIH), 188–210 (FKCVLCTKSFRQSTHLKIHQLTH), and 216–238 (FQCCFCQKGFKIQSKLLKHKQIH). Lys262 participates in a covalent cross-link: Glycyl lysine isopeptide (Lys-Gly) (interchain with G-Cter in SUMO2). The C2H2-type 7; degenerate zinc finger occupies 294–318 (FQCPKCEKCFESEQILNEHSCFPAR). Glycyl lysine isopeptide (Lys-Gly) (interchain with G-Cter in SUMO2) cross-links involve residues Lys420 and Lys437. 4 C2H2-type zinc fingers span residues 475 to 497 (CPCDKCEKVFPSISKLKRHYLIH), 503 to 525 (FGCNICGKSFRQSAHLKRHEQTH), 623 to 645 (YRCSVCAKSFRSPSKLERHYLIH), and 651 to 673 (FECSVCGKTFRQAPHWKRHQLTH). Residue Lys681 forms a Glycyl lysine isopeptide (Lys-Gly) (interchain with G-Cter in SUMO2) linkage.

The protein belongs to the krueppel C2H2-type zinc-finger protein family.

The protein resides in the nucleus. Its function is as follows. May be involved in transcriptional regulation. This chain is Zinc finger protein 770 (ZNF770), found in Pongo abelii (Sumatran orangutan).